A 536-amino-acid polypeptide reads, in one-letter code: Phosphoenolpyruvate carboxykinase (ATP) (536 aa).

3 residues coordinate substrate: Arg-62, Tyr-203, and Lys-209. ATP contacts are provided by residues Lys-209, His-228, and 244 to 252 (GLSGTGKTT). The Mn(2+) site is built by Lys-209 and His-228. Asp-265 contributes to the Mn(2+) binding site. ATP-binding positions include Glu-293, Arg-329, 445–446 (RI), and Thr-451. Arg-329 contributes to the substrate binding site.

Belongs to the phosphoenolpyruvate carboxykinase (ATP) family. In terms of assembly, monomer. It depends on Mn(2+) as a cofactor.

The protein localises to the cytoplasm. It catalyses the reaction oxaloacetate + ATP = phosphoenolpyruvate + ADP + CO2. Its pathway is carbohydrate biosynthesis; gluconeogenesis. Functionally, involved in the gluconeogenesis. Catalyzes the conversion of oxaloacetate (OAA) to phosphoenolpyruvate (PEP) through direct phosphoryl transfer between the nucleoside triphosphate and OAA. In Glaesserella parasuis serovar 5 (strain SH0165) (Haemophilus parasuis), this protein is Phosphoenolpyruvate carboxykinase (ATP).